The sequence spans 577 residues: Heavy metal-associated isoprenylated plant protein 34 (577 aa).

An HMA domain is found at 9–72 (LQTCVLKVNV…KLSKSGKHAE (64 aa)). A metal cation contacts are provided by C20 and C23. The segment covering 77–87 (GGGGGGGGGKG) has biased composition (gly residues). Disordered regions lie at residues 77 to 136 (GGGG…QPMQ) and 150 to 451 (AAHG…GPGG). A compositionally biased stretch (low complexity) spans 97 to 106 (NLNMGGNNKP). A compositionally biased stretch (gly residues) spans 118–129 (KAGGGGGGGQNH). Residues 168-177 (KDQKKSVKFA) are compositionally biased toward basic and acidic residues. The segment covering 178-213 (DDEDDEFSEDDYDDEDFSEDDYDDDEFDDDEDDDDE) has biased composition (acidic residues). A compositionally biased stretch (low complexity) spans 227–244 (HMPPNKMMMPNKMMPQMG). Gly residues-rich tracts occupy residues 245 to 254 (GHHGNGGGPK) and 266 to 281 (FKGGGGGGKKGGGGGF). Basic and acidic residues-rich tracts occupy residues 294-326 (KNGKDGKKGKGGEKGKKEGKENKGGGKTGKTDA) and 344-358 (NGDEKKSAGKKDGHG). 2 stretches are compositionally biased toward gly residues: residues 379–392 (KKGGGGTKGGGHGG) and 420–451 (GIGGGPMGPGGPMGPGGPMGQGGPMGMMGPGG). C574 bears the Cysteine methyl ester mark. C574 is lipidated: S-farnesyl cysteine. Residues 575 to 577 (SIM) constitute a propeptide, removed in mature form.

This sequence belongs to the HIPP family.

In terms of biological role, heavy-metal-binding protein. The protein is Heavy metal-associated isoprenylated plant protein 34 of Arabidopsis thaliana (Mouse-ear cress).